A 597-amino-acid chain; its full sequence is Protein GRISEA (597 aa).

Positions M1–L41 form a DNA-binding region, copper-fist. Zn(2+) contacts are provided by C11, C14, C23, and H25. 4 disordered regions span residues P70–R115, A233–G352, S407–N428, and S467–L541. A compositionally biased stretch (polar residues) spans S92 to T103. Residues K104 to R115 show a composition bias toward low complexity. Residues G269 to K281 are compositionally biased toward gly residues. Pro residues predominate over residues Q287–Q314. Residues N469–S495 show a composition bias toward low complexity. Polar residues predominate over residues A521–A530.

It is found in the nucleus. In terms of biological role, copper-sensing transcription factor that regulates copper uptake by transactivation of Ctr3, a high affinity copper permease. Binds to the palindromic UAS sequence 5'-TGTTGCTCANNNNAGAGCAACT-3'. Also transactivates Sod2, a mitochondrial manganese superoxide dismutase through the palindromic UAS sequence 5'-GTTTGCTCA-3' with 352 bp separating the two inverted repeats. Loss of function indirectly leads to rearrangement of mitochondrial DNA associated with senescence in wild-type strains. The protein is Protein GRISEA of Podospora anserina (Pleurage anserina).